The chain runs to 355 residues: Protein RecA (355 aa).

72 to 79 (GPESSGKT) serves as a coordination point for ATP.

The protein belongs to the RecA family.

It is found in the cytoplasm. Can catalyze the hydrolysis of ATP in the presence of single-stranded DNA, the ATP-dependent uptake of single-stranded DNA by duplex DNA, and the ATP-dependent hybridization of homologous single-stranded DNAs. It interacts with LexA causing its activation and leading to its autocatalytic cleavage. The sequence is that of Protein RecA from Wolbachia sp. subsp. Brugia malayi (strain TRS).